The sequence spans 691 residues: Elongation factor G (691 aa).

In terms of domain architecture, tr-type G spans 8–283 (EDYRNFGIMA…AVVDFLPSPI (276 aa)). GTP contacts are provided by residues 17-24 (AHIDAGKT), 81-85 (DTPGH), and 135-138 (NKMD).

It belongs to the TRAFAC class translation factor GTPase superfamily. Classic translation factor GTPase family. EF-G/EF-2 subfamily.

The protein localises to the cytoplasm. Catalyzes the GTP-dependent ribosomal translocation step during translation elongation. During this step, the ribosome changes from the pre-translocational (PRE) to the post-translocational (POST) state as the newly formed A-site-bound peptidyl-tRNA and P-site-bound deacylated tRNA move to the P and E sites, respectively. Catalyzes the coordinated movement of the two tRNA molecules, the mRNA and conformational changes in the ribosome. This Xanthobacter autotrophicus (strain ATCC BAA-1158 / Py2) protein is Elongation factor G.